A 160-amino-acid chain; its full sequence is Cytochrome b6-f complex subunit 4 (160 aa).

The next 3 membrane-spanning stretches (helical) occupy residues 36-56 (LLYLFPVCILGTFACCIGLAV), 95-115 (LLGVLAMAAVPAGLITVPFIE), and 131-151 (LVFITGFIFAVWFGIGACLPI).

Belongs to the cytochrome b family. PetD subfamily. In terms of assembly, the 4 large subunits of the cytochrome b6-f complex are cytochrome b6, subunit IV (17 kDa polypeptide, petD), cytochrome f and the Rieske protein, while the 4 small subunits are petG, petL, petM and petN. The complex functions as a dimer.

It is found in the plastid. The protein localises to the chloroplast thylakoid membrane. In terms of biological role, component of the cytochrome b6-f complex, which mediates electron transfer between photosystem II (PSII) and photosystem I (PSI), cyclic electron flow around PSI, and state transitions. This chain is Cytochrome b6-f complex subunit 4, found in Thalassiosira pseudonana (Marine diatom).